Here is a 293-residue protein sequence, read N- to C-terminus: Nucleotide-binding protein Csac_1160 (293 aa).

11 to 18 (GMSGAGKS) is an ATP binding site. Residue 62–65 (DIRG) participates in GTP binding.

Belongs to the RapZ-like family.

Its function is as follows. Displays ATPase and GTPase activities. The sequence is that of Nucleotide-binding protein Csac_1160 from Caldicellulosiruptor saccharolyticus (strain ATCC 43494 / DSM 8903 / Tp8T 6331).